Consider the following 120-residue polypeptide: Large ribosomal subunit protein bL19 (120 aa).

It belongs to the bacterial ribosomal protein bL19 family.

This protein is located at the 30S-50S ribosomal subunit interface and may play a role in the structure and function of the aminoacyl-tRNA binding site. The protein is Large ribosomal subunit protein bL19 of Marinomonas sp. (strain MWYL1).